The sequence spans 335 residues: MGASSSSALARLGLPARPWPRWLGVAALGLAAVALGTVAWRRAWPRRRRRLQQVGTVAKLWIYPVKSCKGVPVSEAECTAMGLRSGNLRDRFWLVIKEDGHMVTARQEPRLVLISIIYENNCLIFRAPDMDQLVLPSKQPSSNKLHNCRIFGLDIKGRDCGNEAAKWFTNFLKTEAYRLVQFETNMKGRTSRKLLPTLDQNFQVAYPDYCPLLIMTDASLVDLNTRMEKKMKMENFRPNIVVTGCDAFEEDTWDELLIGSVEVKKVMACPRCILTTVDPDTGVIDRKQPLDTLKSYRLCDPSERELYKLSPLFGIYYSVEKIGSLRVGDPVYRMV.

Residues 1 to 35 (MGASSSSALARLGLPARPWPRWLGVAALGLAAVAL) constitute a mitochondrion transit peptide. Glycyl lysine isopeptide (Lys-Gly) (interchain with G-Cter in ubiquitin) cross-links involve residues Lys59, Lys138, and Lys144. At Lys156 the chain carries N6-acetyllysine; alternate. Lys156 participates in a covalent cross-link: Glycyl lysine isopeptide (Lys-Gly) (interchain with G-Cter in ubiquitin); alternate. Glycyl lysine isopeptide (Lys-Gly) (interchain with G-Cter in ubiquitin) cross-links involve residues Lys166, Lys173, Lys187, Lys287, and Lys294. An MOSC domain is found at 188 to 334 (GRTSRKLLPT…LRVGDPVYRM (147 aa)).

In terms of assembly, component of a complex composed of cytochrome b5, NADH-cytochrome b5 reductase (CYB5R3) and MTARC2. Mo-molybdopterin serves as cofactor. In terms of processing, ubiquitinated by PRKN during mitophagy, leading to its degradation and enhancement of mitophagy. Deubiquitinated by USP30.

The protein resides in the mitochondrion outer membrane. Its subcellular location is the peroxisome. The catalysed reaction is N(omega)-hydroxy-L-arginine + 2 Fe(II)-[cytochrome b5] + 2 H(+) = L-arginine + 2 Fe(III)-[cytochrome b5] + H2O. Catalyzes the reduction of N-oxygenated molecules, acting as a counterpart of cytochrome P450 and flavin-containing monooxygenases in metabolic cycles. As a component of prodrug-converting system, reduces a multitude of N-hydroxylated prodrugs particularly amidoximes, leading to increased drug bioavailability. May be involved in mitochondrial N(omega)-hydroxy-L-arginine (NOHA) reduction, regulating endogenous nitric oxide levels and biosynthesis. Postulated to cleave the N-OH bond of N-hydroxylated substrates in concert with electron transfer from NADH to cytochrome b5 reductase then to cytochrome b5, the ultimate electron donor that primes the active site for substrate reduction. This Homo sapiens (Human) protein is Mitochondrial amidoxime reducing component 2.